Here is a 438-residue protein sequence, read N- to C-terminus: Mannan endo-1,4-beta-mannosidase F (438 aa).

An N-terminal signal peptide occupies residues 1-17 (MHPLPSVALLSAIGAVA). Positions 19–54 (QVGPWGQCGGRSYTGETSCVSGWSCVLFNEWYSQCQ) constitute a CBM1 domain. A ser-rich linker region spans residues 60–96 (STSSVSATAAPSSTSSSKESVPSATTSKKPVPTGSSS). Low complexity predominate over residues 61-86 (TSSVSATAAPSSTSSSKESVPSATTS). The interval 61-92 (TSSVSATAAPSSTSSSKESVPSATTSKKPVPT) is disordered. The interval 97–438 (FVKADGLKFN…CGVADHLSTL (342 aa)) is catalytic. 2 residues coordinate substrate: Trp-149 and Asn-263. The Proton donor role is filled by Glu-264. Asn-277 carries N-linked (GlcNAc...) asparagine glycosylation. Position 339 (Tyr-339) interacts with substrate. Glu-373 acts as the Nucleophile in catalysis. Trp-402 contacts substrate.

The protein belongs to the glycosyl hydrolase 5 (cellulase A) family.

Its subcellular location is the secreted. It carries out the reaction Random hydrolysis of (1-&gt;4)-beta-D-mannosidic linkages in mannans, galactomannans and glucomannans.. In terms of biological role, endo-1,4-mannanase, a crucial enzyme for depolymerization of seed galactomannans and wood galactoglucomannans. This chain is Mannan endo-1,4-beta-mannosidase F (manF), found in Aspergillus fumigatus (strain ATCC MYA-4609 / CBS 101355 / FGSC A1100 / Af293) (Neosartorya fumigata).